A 754-amino-acid chain; its full sequence is ATP-dependent RNA helicase drs1 (754 aa).

The tract at residues 121–237 (SKTESNRASN…SDSEEDEEEI (117 aa)) is disordered. Acidic residues-rich tracts occupy residues 155–175 (SEEE…EDLA) and 186–205 (ENED…DDIT). Residues 259–287 (SSFQSMNLSRPILKGLSNLGFEVPTQIQD) carry the Q motif motif. The region spanning 290 to 464 (IPLALLGKDI…RLSLNRPVRV (175 aa)) is the Helicase ATP-binding domain. ATP is bound at residue 303–310 (AVTGSGKT). Residues 412 to 415 (DEAD) carry the DEAD box motif. In terms of domain architecture, Helicase C-terminal spans 475–641 (LLTQEFVRVR…NRNLDFNKVE (167 aa)). Residues 655 to 728 (QKVLDEEKQE…RKKQMEKEEV (74 aa)) adopt a coiled-coil conformation. The segment at 692–754 (ARTWFQSEKD…STKKSKSKRK (63 aa)) is disordered. Composition is skewed to basic and acidic residues over residues 698–715 (SEKD…DKKS) and 723–741 (MEKE…DRLS). A compositionally biased stretch (basic residues) spans 742–754 (NKKSTKKSKSKRK).

It belongs to the DEAD box helicase family. DDX27/DRS1 subfamily. In terms of assembly, associates with pre-ribosomal particles.

It is found in the nucleus. The protein localises to the nucleolus. It carries out the reaction ATP + H2O = ADP + phosphate + H(+). ATP-binding RNA helicase involved in ribosome assembly. This Schizosaccharomyces pombe (strain 972 / ATCC 24843) (Fission yeast) protein is ATP-dependent RNA helicase drs1 (drs1).